A 332-amino-acid polypeptide reads, in one-letter code: Biotin synthase (332 aa).

The 230-residue stretch at 53–282 (YFGKKVKLNM…SKEIRISGGR (230 aa)) folds into the Radical SAM core domain. [4Fe-4S] cluster contacts are provided by cysteine 71, cysteine 75, and cysteine 78. Residues cysteine 115, cysteine 147, cysteine 207, and arginine 277 each contribute to the [2Fe-2S] cluster site.

It belongs to the radical SAM superfamily. Biotin synthase family. As to quaternary structure, homodimer. Requires [4Fe-4S] cluster as cofactor. The cofactor is [2Fe-2S] cluster.

The catalysed reaction is (4R,5S)-dethiobiotin + (sulfur carrier)-SH + 2 reduced [2Fe-2S]-[ferredoxin] + 2 S-adenosyl-L-methionine = (sulfur carrier)-H + biotin + 2 5'-deoxyadenosine + 2 L-methionine + 2 oxidized [2Fe-2S]-[ferredoxin]. The protein operates within cofactor biosynthesis; biotin biosynthesis; biotin from 7,8-diaminononanoate: step 2/2. Its function is as follows. Catalyzes the conversion of dethiobiotin (DTB) to biotin by the insertion of a sulfur atom into dethiobiotin via a radical-based mechanism. The protein is Biotin synthase of Bacillus cytotoxicus (strain DSM 22905 / CIP 110041 / 391-98 / NVH 391-98).